Here is a 64-residue protein sequence, read N- to C-terminus: Large ribosomal subunit protein bL33 (64 aa).

This sequence belongs to the bacterial ribosomal protein bL33 family.

The sequence is that of Large ribosomal subunit protein bL33 from Nostoc punctiforme (strain ATCC 29133 / PCC 73102).